The chain runs to 65 residues: Beta-mammal toxin Tma1 (65 aa).

Positions Lys-2–Gly-64 constitute an LCN-type CS-alpha/beta domain. Intrachain disulfides connect Cys-12/Cys-63, Cys-16/Cys-38, Cys-24/Cys-44, and Cys-28/Cys-46.

The protein belongs to the long (4 C-C) scorpion toxin superfamily. Sodium channel inhibitor family. Expressed by the venom gland.

It is found in the secreted. Its function is as follows. Beta toxins bind voltage-independently at site-4 of sodium channels (Nav) and shift the voltage of activation toward more negative potentials thereby affecting sodium channel activation and promoting spontaneous and repetitive firing. This toxin acts on human Nav1.4/SCN4A and Nav1.6/SCN8A voltage-gated sodium channels. This is Beta-mammal toxin Tma1 from Tityus macrochirus (Scorpion).